The primary structure comprises 1184 residues: Calcium-activated potassium channel subunit alpha-1a (1184 aa).

Residues M1–M39 are Extracellular-facing. A helical membrane pass occupies residues W40–L60. The Cytoplasmic portion of the chain corresponds to W61–R132. 3 S-palmitoyl cysteine lipidation sites follow: C71, C72, and C74. Residues V133–S153 traverse the membrane as a helical segment. The Extracellular segment spans residues S154–T168. A helical transmembrane segment spans residues L169 to A189. Residues A190–K193 are Cytoplasmic-facing. The helical transmembrane segment at L194–V214 threads the bilayer. Residues S215–L254 lie on the Extracellular side of the membrane. A helical membrane pass occupies residues V255 to V275. The Cytoplasmic portion of the chain corresponds to E276 to Q289. Residues P290–G310 form a helical membrane-spanning segment. Residues D311 to L321 lie on the Extracellular side of the membrane. The helical transmembrane segment at F322–I342 threads the bilayer. Residues E343–C1184 are Cytoplasmic-facing. The region spanning R361–I503 is the RCK N-terminal 1 domain. The Mg(2+) site is built by E393, Q416, and E418. Position 468 (N468) interacts with Ca(2+). A disordered region spans residues E655–C677. Position 659 is a phosphothreonine (T659). A phosphoserine mark is found at S661, S674, and S678. The region spanning S735–P879 is the RCK N-terminal 2 domain. Phosphothreonine is present on T866. S874 and S878 each carry phosphoserine. Q908, D911, D914, and D916 together coordinate Ca(2+). The short motif at Q908–D916 is the Calcium bowl element. The disordered stretch occupies residues R1082–A1143. A compositionally biased stretch (low complexity) spans S1084–S1104. A compositionally biased stretch (basic and acidic residues) spans K1116 to N1125.

This sequence belongs to the potassium channel family. Calcium-activated (TC 1.A.1.3) subfamily. KCa1.1/KCNMA1 sub-subfamily. Homotetramer; which constitutes the calcium-activated potassium channel. Phosphorylated. Post-translationally, palmitoylated.

Its subcellular location is the cell membrane. It carries out the reaction K(+)(in) = K(+)(out). Its function is as follows. Potassium channel activated by both membrane depolarization or increase in cytosolic Ca(2+) that mediates export of K(+). It is also activated by the concentration of cytosolic Mg(2+). Its activation dampens the excitatory events that elevate the cytosolic Ca(2+) concentration and/or depolarize the cell membrane. It therefore contributes to repolarization of the membrane potential. Involved in determining peripheral auditory sensitivity. The chain is Calcium-activated potassium channel subunit alpha-1a from Danio rerio (Zebrafish).